Consider the following 371-residue polypeptide: 4-hydroxy-3-methylbut-2-en-1-yl diphosphate synthase (flavodoxin) (371 aa).

Positions 270, 273, 305, and 312 each coordinate [4Fe-4S] cluster.

The protein belongs to the IspG family. [4Fe-4S] cluster serves as cofactor.

It carries out the reaction (2E)-4-hydroxy-3-methylbut-2-enyl diphosphate + oxidized [flavodoxin] + H2O + 2 H(+) = 2-C-methyl-D-erythritol 2,4-cyclic diphosphate + reduced [flavodoxin]. It participates in isoprenoid biosynthesis; isopentenyl diphosphate biosynthesis via DXP pathway; isopentenyl diphosphate from 1-deoxy-D-xylulose 5-phosphate: step 5/6. Functionally, converts 2C-methyl-D-erythritol 2,4-cyclodiphosphate (ME-2,4cPP) into 1-hydroxy-2-methyl-2-(E)-butenyl 4-diphosphate. The protein is 4-hydroxy-3-methylbut-2-en-1-yl diphosphate synthase (flavodoxin) of Shewanella baltica (strain OS223).